We begin with the raw amino-acid sequence, 155 residues long: RNA-binding protein 3 (155 aa).

The RRM domain occupies 6–84 (GKLFVGGLNF…RQIRVDHAGK (79 aa)). An Omega-N-methylarginine modification is found at arginine 47. Positions 79 to 155 (VDHAGKSARG…GGNYRDNYDN (77 aa)) are disordered. At arginine 105 the chain carries Asymmetric dimethylarginine; alternate. Arginine 105 carries the dimethylated arginine; alternate modification. At arginine 105 the chain carries Omega-N-methylarginine; alternate. The span at 105–114 (RGGGDQGYGS) shows a compositional bias: gly residues. Residues arginine 120 and arginine 130 each carry the omega-N-methylarginine modification. 2 positions are modified to phosphoserine: serine 135 and serine 145. Position 153 is a phosphotyrosine (tyrosine 153).

Interacts with RPL4. Associates with the 60S ribosomal subunits. Arg-105 is dimethylated, probably to asymmetric dimethylarginine. In terms of processing, phosphorylated. Isoform 2 is methylated. In terms of tissue distribution, widely expressed in the brain. Highly expressed in the cerebellum and olfactory bulb (at protein level). Expressed in neurons and glial cells.

The protein resides in the nucleus. Its subcellular location is the cytoplasm. It localises to the cell projection. It is found in the dendrite. In terms of biological role, cold-inducible mRNA binding protein that enhances global protein synthesis at both physiological and mild hypothermic temperatures. Reduces the relative abundance of microRNAs, when overexpressed. Enhances phosphorylation of translation initiation factors and active polysome formation. In Rattus norvegicus (Rat), this protein is RNA-binding protein 3 (Rbm3).